Here is a 106-residue protein sequence, read N- to C-terminus: Small ribosomal subunit protein uS10 (106 aa).

It belongs to the universal ribosomal protein uS10 family. Part of the 30S ribosomal subunit.

Involved in the binding of tRNA to the ribosomes. In Synechococcus sp. (strain CC9605), this protein is Small ribosomal subunit protein uS10.